The following is a 310-amino-acid chain: Nucleotide-binding protein Mmc1_3333 (310 aa).

Residue G19–S26 coordinates ATP.

Belongs to the RapZ-like family.

Displays ATPase and GTPase activities. The sequence is that of Nucleotide-binding protein Mmc1_3333 from Magnetococcus marinus (strain ATCC BAA-1437 / JCM 17883 / MC-1).